A 56-amino-acid polypeptide reads, in one-letter code: Small ribosomal subunit protein uS14 (56 aa).

Zn(2+)-binding residues include Cys-21, Cys-24, Cys-39, and Cys-42.

The protein belongs to the universal ribosomal protein uS14 family. The cofactor is Zn(2+).

This Griffithsia japonica (Red alga) protein is Small ribosomal subunit protein uS14 (RPS29).